Consider the following 211-residue polypeptide: Histidine biosynthesis bifunctional protein HisIE (211 aa).

The tract at residues 1–107 is phosphoribosyl-AMP cyclohydrolase; sequence MNKLIDFSKG…FNSEIESRFK (107 aa). The segment at 108–211 is phosphoribosyl-ATP pyrophosphohydrolase; the sequence is IQALAQTIHQ…KGERKEVREW (104 aa).

It in the N-terminal section; belongs to the PRA-CH family. In the C-terminal section; belongs to the PRA-PH family.

The protein resides in the cytoplasm. The enzyme catalyses 1-(5-phospho-beta-D-ribosyl)-ATP + H2O = 1-(5-phospho-beta-D-ribosyl)-5'-AMP + diphosphate + H(+). It catalyses the reaction 1-(5-phospho-beta-D-ribosyl)-5'-AMP + H2O = 1-(5-phospho-beta-D-ribosyl)-5-[(5-phospho-beta-D-ribosylamino)methylideneamino]imidazole-4-carboxamide. It participates in amino-acid biosynthesis; L-histidine biosynthesis; L-histidine from 5-phospho-alpha-D-ribose 1-diphosphate: step 2/9. Its pathway is amino-acid biosynthesis; L-histidine biosynthesis; L-histidine from 5-phospho-alpha-D-ribose 1-diphosphate: step 3/9. This Staphylococcus epidermidis (strain ATCC 35984 / DSM 28319 / BCRC 17069 / CCUG 31568 / BM 3577 / RP62A) protein is Histidine biosynthesis bifunctional protein HisIE.